The following is a 211-amino-acid chain: Uracil phosphoribosyltransferase (211 aa).

Residues Arg-77, Arg-102, and 129 to 137 (DPMLATGGS) contribute to the 5-phospho-alpha-D-ribose 1-diphosphate site. Residues Ile-192 and 197-199 (GDA) each bind uracil. A 5-phospho-alpha-D-ribose 1-diphosphate-binding site is contributed by Asp-198.

The protein belongs to the UPRTase family. Requires Mg(2+) as cofactor.

The catalysed reaction is UMP + diphosphate = 5-phospho-alpha-D-ribose 1-diphosphate + uracil. The protein operates within pyrimidine metabolism; UMP biosynthesis via salvage pathway; UMP from uracil: step 1/1. Its activity is regulated as follows. Allosterically activated by GTP. Its function is as follows. Catalyzes the conversion of uracil and 5-phospho-alpha-D-ribose 1-diphosphate (PRPP) to UMP and diphosphate. The polypeptide is Uracil phosphoribosyltransferase (Corynebacterium diphtheriae (strain ATCC 700971 / NCTC 13129 / Biotype gravis)).